The chain runs to 177 residues: ATP-dependent protease subunit HslV (177 aa).

The active site involves T2. G158, C161, and T164 together coordinate Na(+).

This sequence belongs to the peptidase T1B family. HslV subfamily. In terms of assembly, a double ring-shaped homohexamer of HslV is capped on each side by a ring-shaped HslU homohexamer. The assembly of the HslU/HslV complex is dependent on binding of ATP.

The protein localises to the cytoplasm. It carries out the reaction ATP-dependent cleavage of peptide bonds with broad specificity.. Allosterically activated by HslU binding. In terms of biological role, protease subunit of a proteasome-like degradation complex believed to be a general protein degrading machinery. This is ATP-dependent protease subunit HslV from Pseudomonas aeruginosa (strain LESB58).